The chain runs to 93 residues: Small ribosomal subunit protein bS16 (93 aa).

Belongs to the bacterial ribosomal protein bS16 family.

The polypeptide is Small ribosomal subunit protein bS16 (Dictyoglomus turgidum (strain DSM 6724 / Z-1310)).